The primary structure comprises 93 residues: Histone H2B (93 aa).

The span at 1-12 shows a compositional bias: low complexity; it reads MPEPAKSAPAPK. The segment at 1–31 is disordered; the sequence is MPEPAKSAPAPKKGSKKAVTKTQKKGDKKRX. N6-acetyllysine is present on residues K6 and K13. The span at 13 to 28 shows a compositional bias: basic residues; the sequence is KGSKKAVTKTQKKGDK. A Phosphoserine modification is found at S15. K16 and K21 each carry N6-acetyllysine.

It belongs to the histone H2B family. The nucleosome is a histone octamer containing two molecules each of H2A, H2B, H3 and H4 assembled in one H3-H4 heterotetramer and two H2A-H2B heterodimers. The octamer wraps approximately 147 bp of DNA. Monoubiquitination at the C-terminal Lys gives a specific tag for epigenetic transcriptional activation and is also prerequisite for histone H3 'Lys-4' and 'Lys-79' methylation. In terms of processing, phosphorylated on Ser-15 during apoptosis; which facilitates apoptotic chromatin condensation.

The protein localises to the nucleus. It is found in the chromosome. Functionally, core component of nucleosome. Nucleosomes wrap and compact DNA into chromatin, limiting DNA accessibility to the cellular machineries which require DNA as a template. Histones thereby play a central role in transcription regulation, DNA repair, DNA replication and chromosomal stability. DNA accessibility is regulated via a complex set of post-translational modifications of histones, also called histone code, and nucleosome remodeling. The polypeptide is Histone H2B (Crocodylus niloticus (Nile crocodile)).